The sequence spans 1017 residues: Fanconi-associated nuclease 1 (1017 aa).

Over residues 1-10 (MMSEGKPPDK) the composition is skewed to basic and acidic residues. The segment at 1–23 (MMSEGKPPDKKRPRRSLSISKNK) is disordered. Positions 11 to 23 (KRPRRSLSISKNK) are enriched in basic residues. The D-box signature appears at 14–22 (RRSLSISKN). Residues 41-69 (KLACPVCSKMVPRYDLNRHLDEMCANNDF) form a UBZ4-type zinc finger. Cys44, Cys47, His59, and Cys64 together coordinate Zn(2+). Disordered regions lie at residues 95-121 (EDVTPKKSPPPKTNLTPGQSDSAKREV) and 170-189 (IDKDEEFAGSSPQSSKSTVV). The segment covering 179-189 (SSPQSSKSTVV) has biased composition (polar residues). Position 180 is a phosphoserine (Ser180). The KEN box motif lies at 212 to 214 (KEN). A coiled-coil region spans residues 671–696 (SRFVEILQRLHMYEEAVRELESLLSQ). Residues Glu834, Asp960, Glu975, and Val976 each contribute to the Mn(2+) site. The 113-residue stretch at 895-1007 (EESLRAWVAA…GAEVEVCHVV (113 aa)) folds into the VRR-NUC domain.

Belongs to the FAN1 family. In terms of assembly, interacts with FANCD2 (when monoubiquitinated). Interacts with FANCI, MLH1, MLH3 and PMS2. Mn(2+) is required as a cofactor. The cofactor is Mg(2+). Post-translationally, ubiquitinated and degraded during mitotic exit by the APC/C-Cdh1 complex.

It is found in the nucleus. It carries out the reaction Hydrolytically removes 5'-nucleotides successively from the 3'-hydroxy termini of 3'-hydroxy-terminated oligonucleotides.. Functionally, nuclease required for the repair of DNA interstrand cross-links (ICL) recruited at sites of DNA damage by monoubiquitinated FANCD2. Specifically involved in repair of ICL-induced DNA breaks by being required for efficient homologous recombination, probably in the resolution of homologous recombination intermediates. Not involved in DNA double-strand breaks resection. Acts as a 5'-3' exonuclease that anchors at a cut end of DNA and cleaves DNA successively at every third nucleotide, allowing to excise an ICL from one strand through flanking incisions. Probably keeps excising with 3'-flap annealing until it reaches and unhooks the ICL. Acts at sites that have a 5'-terminal phosphate anchor at a nick or a 1- or 2-nucleotide flap and is augmented by a 3' flap. Also has endonuclease activity toward 5'-flaps. The sequence is that of Fanconi-associated nuclease 1 from Homo sapiens (Human).